The following is a 1535-amino-acid chain: CLIP-associating protein 1 (1535 aa).

HEAT repeat units lie at residues 87–124 (AQIGTVLPSLIDRLGDAKDSVREQDQTLLLKIMDQAAN) and 163–200 (LTLSKIVPHICNLLGDPNSQVRDAAINSLVEIYRHVGE). Residues 237–290 (NEKNFDDEDSVDGNRPSSASSSSSKAPSSSRRNVNLGTTRRLMSSSLGSKSSAA) are disordered. Residue serine 246 is modified to Phosphoserine. A compositionally biased stretch (low complexity) spans 252–266 (PSSASSSSSKAPSSS). Residues 267–279 (RRNVNLGTTRRLM) show a composition bias toward polar residues. A compositionally biased stretch (low complexity) spans 280 to 290 (SSSLGSKSSAA). HEAT repeat units follow at residues 405–440 (HGAEAIMPTIFNLIPNSAKIMATSGVVAVRLIIRHT) and 441–477 (HIPRLIPVITSNCTSKSVAVRRRCFEFLDLLLQEWQT). Disordered regions lie at residues 543–600 (SDSI…RSRS) and 612–782 (SKVS…GRIP). Phosphoserine occurs at positions 545, 548, 558, 559, and 568. Residues 548–567 (SLPQSDRSSSSSQESLNRPL) show a composition bias toward low complexity. Residues 579-594 (SRGSTVSTKSVSTTGS) show a composition bias toward low complexity. Serine 600 carries the phosphoserine modification. Over residues 612–633 (SKVSSSSGSPAFSSAAALPPGS) the composition is skewed to low complexity. Serine 636, serine 646, serine 647, and serine 649 each carry phosphoserine. Positions 645–658 (QSSGSTTNVASTPD) are enriched in polar residues. Threonine 656 is modified (phosphothreonine). The tract at residues 662 to 782 (RSRAKVVSQS…FGLGQSGRIP (121 aa)) is interaction with microtubules, MAPRE1 and MAPRE3. Residues 673-695 (RSRSANPAGAGSRSSSPGKLLGS) show a composition bias toward low complexity. Serine 684, serine 688, serine 695, and serine 702 each carry phosphoserine. Position 708 is a phosphothreonine (threonine 708). Phosphoserine is present on serine 711. Residues 721-730 (QGCSRETSPN) are compositionally biased toward polar residues. 3 positions are modified to phosphoserine: serine 784, serine 794, and serine 820. Residues 971 to 1008 (QQFNILMRFIVDQTQTPNLKVKVAILKYIESLARQMDP) form an HEAT 5 repeat. The segment at 1078–1157 (LKNSSNTGVG…APSHKTLRRS (80 aa)) is disordered. Residues 1079–1094 (KNSSNTGVGSPSNTIG) are compositionally biased toward polar residues. Phosphoserine is present on serine 1088. Phosphothreonine occurs at positions 1092 and 1096. Low complexity predominate over residues 1103–1112 (SRTSPLTSPT). Phosphoserine occurs at positions 1110, 1139, and 1193. A compositionally biased stretch (basic and acidic residues) spans 1200-1213 (PIKRDGKKDCDIVS). Disordered regions lie at residues 1200–1233 (PIKRDGKKDCDIVSRDGGAASPATEGRGGSEIEG) and 1245–1266 (LNTQPPRAFPGPRAREYNPYPY). Serine 1220 carries the post-translational modification Phosphoserine. An interaction with CLIP2 and RSN region spans residues 1251–1535 (RAFPGPRARE…SSSSDVSTHS (285 aa)). The tract at residues 1251–1535 (RAFPGPRARE…SSSSDVSTHS (285 aa)) is interaction with PHLDB2. Residues 1253-1535 (FPGPRAREYN…SSSSDVSTHS (283 aa)) form a localization to kinetochores region. Residues 1296–1327 (DHSDLVADLLKELSNHNERVEERKGALLELLK) adopt a coiled-coil conformation. HEAT repeat units follow at residues 1339 to 1376 (EHFKTILLLLLETLGDKDHSIRALALRVLREILRNQPA) and 1457 to 1494 (QLLVDIIPGLLQGYDNTESSVRKASVFCLVAIYSVIGE).

It belongs to the CLASP family. Interacts with ERC1, MAPRE1, MAPRE3, microtubules, and PHLDB2. The interaction with ERC1 may be mediated by PHLDB2. Interacts with GCC2; recruits CLASP1 to Golgi membranes. Interacts with CLIP2 and RSN. Interacts with MACF1. Interacts with mtcl2 and MTCL1. In terms of tissue distribution, highly expressed in brain and heart and at lower levels in kidney, lung, skeletal muscle and testis.

It localises to the cytoplasm. The protein resides in the cytoskeleton. It is found in the microtubule organizing center. Its subcellular location is the centrosome. The protein localises to the chromosome. It localises to the centromere. The protein resides in the kinetochore. It is found in the spindle. Its subcellular location is the golgi apparatus. The protein localises to the trans-Golgi network. Its function is as follows. Microtubule plus-end tracking protein that promotes the stabilization of dynamic microtubules. Involved in the nucleation of noncentrosomal microtubules originating from the trans-Golgi network (TGN). Required for the polarization of the cytoplasmic microtubule arrays in migrating cells towards the leading edge of the cell. May act at the cell cortex to enhance the frequency of rescue of depolymerizing microtubules by attaching their plus-ends to cortical platforms composed of ERC1 and PHLDB2. This cortical microtubule stabilizing activity is regulated at least in part by phosphatidylinositol 3-kinase signaling. Also performs a similar stabilizing function at the kinetochore which is essential for the bipolar alignment of chromosomes on the mitotic spindle. The protein is CLIP-associating protein 1 (Clasp1) of Mus musculus (Mouse).